Here is a 146-residue protein sequence, read N- to C-terminus: UPF0178 protein Lin1493 (146 aa).

This sequence belongs to the UPF0178 family.

This Listeria innocua serovar 6a (strain ATCC BAA-680 / CLIP 11262) protein is UPF0178 protein Lin1493.